Consider the following 429-residue polypeptide: S-adenosylmethionine synthase (429 aa).

Residue His-14 coordinates ATP. Mg(2+) is bound at residue Asp-16. Glu-42 provides a ligand contact to K(+). L-methionine contacts are provided by Glu-55 and Gln-98. The tract at residues 98–108 is flexible loop; it reads QSADINRGVDR. Residues 165–167, 252–253, Asp-261, 267–268, Ala-284, and Lys-288 contribute to the ATP site; these read DAK, KF, and RK. An L-methionine-binding site is contributed by Asp-261. Lys-292 contacts L-methionine.

It belongs to the AdoMet synthase family. Homotetramer; dimer of dimers. Mg(2+) is required as a cofactor. Requires K(+) as cofactor.

The protein resides in the cytoplasm. It carries out the reaction L-methionine + ATP + H2O = S-adenosyl-L-methionine + phosphate + diphosphate. The protein operates within amino-acid biosynthesis; S-adenosyl-L-methionine biosynthesis; S-adenosyl-L-methionine from L-methionine: step 1/1. Functionally, catalyzes the formation of S-adenosylmethionine (AdoMet) from methionine and ATP. The overall synthetic reaction is composed of two sequential steps, AdoMet formation and the subsequent tripolyphosphate hydrolysis which occurs prior to release of AdoMet from the enzyme. The polypeptide is S-adenosylmethionine synthase (Porphyromonas gingivalis (strain ATCC 33277 / DSM 20709 / CIP 103683 / JCM 12257 / NCTC 11834 / 2561)).